We begin with the raw amino-acid sequence, 938 residues long: Probable glutamyl endopeptidase, chloroplastic (938 aa).

The N-terminal 54 residues, 1–54 (MSSLTILLQRACLRFALLPVPPLRAPLRPPRRPLGLPRRSAMSSSAASRLSHIV), are a transit peptide targeting the chloroplast. Positions 58–76 (GGAAGESSEPPAAAAAASG) are enriched in low complexity. Residues 58 to 77 (GGAAGESSEPPAAAAAASGL) are disordered. Active-site charge relay system residues include Ser762, Asp836, and His870. Polar residues predominate over residues 897–913 (SSKTDSDSVADTENKTV). The interval 897-938 (SSKTDSDSVADTENKTVSASGGGAPCEGPEAEGFSSMQRSLL) is disordered.

This sequence belongs to the peptidase S9D family.

The protein resides in the plastid. It is found in the chloroplast stroma. Serine-type protease active in vitro against the LHCII N-terminal. Cleaves its substrate on the carboxy-side of Glu residues. This chain is Probable glutamyl endopeptidase, chloroplastic (GEP), found in Oryza sativa subsp. japonica (Rice).